The following is a 595-amino-acid chain: RuBisCO large subunit-binding protein subunit beta, chloroplastic (595 aa).

A chloroplast-targeting transit peptide spans 1–49 (MASTFSATTSSCNLSSSAAISSFPLAAGKRNANKVVLPRKNRNVKVSAM).

This sequence belongs to the chaperonin (HSP60) family. Oligomer of probably six alpha and six beta subunits.

The protein resides in the plastid. Its subcellular location is the chloroplast. Its function is as follows. This protein binds RuBisCO small and large subunits and is implicated in the assembly of the enzyme oligomer. The chain is RuBisCO large subunit-binding protein subunit beta, chloroplastic from Pisum sativum (Garden pea).